A 230-amino-acid chain; its full sequence is AA9 family lytic polysaccharide monooxygenase H (230 aa).

The signal sequence occupies residues Met-1–Ala-17. Cu(2+) is bound by residues His-18 and His-89. Cys-59 and Cys-178 are joined by a disulfide. 2 residues coordinate O2: His-164 and Gln-173. Tyr-175 serves as a coordination point for Cu(2+).

Belongs to the polysaccharide monooxygenase AA9 family. Cu(2+) serves as cofactor.

It is found in the secreted. The enzyme catalyses [(1-&gt;4)-beta-D-glucosyl]n+m + reduced acceptor + O2 = 4-dehydro-beta-D-glucosyl-[(1-&gt;4)-beta-D-glucosyl]n-1 + [(1-&gt;4)-beta-D-glucosyl]m + acceptor + H2O.. Its function is as follows. Lytic polysaccharide monooxygenase (LPMO) that depolymerizes crystalline and amorphous polysaccharides via the oxidation of scissile alpha- or beta-(1-4)-glycosidic bonds, yielding primarly C1 oxidation products. Catalysis by LPMOs requires the reduction of the active-site copper from Cu(II) to Cu(I) by a reducing agent and H(2)O(2) or O(2) as a cosubstrate. Active on hemicelluloses, including xylan, glucomannan, and xyloglucan. Preferentially cleaves residual xylan in phosphoric acid-swollen cellulose (PASC). Moreover, when exposed to cellulose-xylan blends, shows a preference for xylan and for releasing oxidized xylooligosaccharides. Has no activity on ivory nut mannan (INM), a linear beta-1,4-linked mannan without substitutions. This is AA9 family lytic polysaccharide monooxygenase H from Malbranchea cinnamomea (Thermophilic fungus).